The following is a 195-amino-acid chain: Nucleoside triphosphate pyrophosphatase (195 aa).

Catalysis depends on D76, which acts as the Proton acceptor.

The protein belongs to the Maf family. Requires a divalent metal cation as cofactor.

It localises to the cytoplasm. The catalysed reaction is a ribonucleoside 5'-triphosphate + H2O = a ribonucleoside 5'-phosphate + diphosphate + H(+). The enzyme catalyses a 2'-deoxyribonucleoside 5'-triphosphate + H2O = a 2'-deoxyribonucleoside 5'-phosphate + diphosphate + H(+). Functionally, nucleoside triphosphate pyrophosphatase. May have a dual role in cell division arrest and in preventing the incorporation of modified nucleotides into cellular nucleic acids. The sequence is that of Nucleoside triphosphate pyrophosphatase from Pelagibacter ubique (strain HTCC1062).